Reading from the N-terminus, the 64-residue chain is uncharacterized protein (64 aa).

Residues 33–55 (YTPLGSYMIFGIVHYFCSYHIGI) traverse the membrane as a helical segment.

It localises to the membrane. This is an uncharacterized protein from Saccharomyces cerevisiae (strain ATCC 204508 / S288c) (Baker's yeast).